We begin with the raw amino-acid sequence, 185 residues long: ATP-dependent protease subunit HslV (185 aa).

Thr-13 is an active-site residue. 3 residues coordinate Na(+): Gly-167, Cys-170, and Thr-173.

Belongs to the peptidase T1B family. HslV subfamily. As to quaternary structure, a double ring-shaped homohexamer of HslV is capped on each side by a ring-shaped HslU homohexamer. The assembly of the HslU/HslV complex is dependent on binding of ATP.

Its subcellular location is the cytoplasm. It carries out the reaction ATP-dependent cleavage of peptide bonds with broad specificity.. Its activity is regulated as follows. Allosterically activated by HslU binding. Its function is as follows. Protease subunit of a proteasome-like degradation complex believed to be a general protein degrading machinery. The sequence is that of ATP-dependent protease subunit HslV from Sinorhizobium medicae (strain WSM419) (Ensifer medicae).